A 253-amino-acid chain; its full sequence is Imidazole glycerol phosphate synthase subunit HisF (253 aa).

Catalysis depends on residues aspartate 11 and aspartate 130.

This sequence belongs to the HisA/HisF family. As to quaternary structure, heterodimer of HisH and HisF.

The protein resides in the cytoplasm. It carries out the reaction 5-[(5-phospho-1-deoxy-D-ribulos-1-ylimino)methylamino]-1-(5-phospho-beta-D-ribosyl)imidazole-4-carboxamide + L-glutamine = D-erythro-1-(imidazol-4-yl)glycerol 3-phosphate + 5-amino-1-(5-phospho-beta-D-ribosyl)imidazole-4-carboxamide + L-glutamate + H(+). Its pathway is amino-acid biosynthesis; L-histidine biosynthesis; L-histidine from 5-phospho-alpha-D-ribose 1-diphosphate: step 5/9. Functionally, IGPS catalyzes the conversion of PRFAR and glutamine to IGP, AICAR and glutamate. The HisF subunit catalyzes the cyclization activity that produces IGP and AICAR from PRFAR using the ammonia provided by the HisH subunit. The chain is Imidazole glycerol phosphate synthase subunit HisF from Gluconobacter oxydans (strain 621H) (Gluconobacter suboxydans).